The primary structure comprises 500 residues: Glucose-1-phosphate adenylyltransferase small subunit 1, chloroplastic/amyloplastic (500 aa).

A chloroplast-targeting transit peptide spans 1–50; the sequence is MAMMAMGAASWAPIPAPARAAAAFYPGRDLAAARRRRGAAARRPFVFTPR.

This sequence belongs to the bacterial/plant glucose-1-phosphate adenylyltransferase family. Heterotetramer composed of two small and two large subunits. In terms of tissue distribution, expressed in leaves.

The protein localises to the plastid. The protein resides in the chloroplast. Its subcellular location is the amyloplast. It catalyses the reaction alpha-D-glucose 1-phosphate + ATP + H(+) = ADP-alpha-D-glucose + diphosphate. It functions in the pathway glycan biosynthesis; starch biosynthesis. Its activity is regulated as follows. Activated by 3'phosphoglycerate, inhibited by orthophosphate. Allosteric regulation. In terms of biological role, involved in synthesis of starch. Catalyzes the synthesis of ADP-glucose, a molecule that serves as an activated glycosyl donor for alpha-1,4-glucan synthesis. Essential for starch synthesis in leaf chloroplasts and endosperm amyloplasts. The sequence is that of Glucose-1-phosphate adenylyltransferase small subunit 1, chloroplastic/amyloplastic from Oryza sativa subsp. japonica (Rice).